We begin with the raw amino-acid sequence, 341 residues long: S-adenosylmethionine:tRNA ribosyltransferase-isomerase (341 aa).

It belongs to the QueA family. Monomer.

The protein localises to the cytoplasm. The catalysed reaction is 7-aminomethyl-7-carbaguanosine(34) in tRNA + S-adenosyl-L-methionine = epoxyqueuosine(34) in tRNA + adenine + L-methionine + 2 H(+). The protein operates within tRNA modification; tRNA-queuosine biosynthesis. Its function is as follows. Transfers and isomerizes the ribose moiety from AdoMet to the 7-aminomethyl group of 7-deazaguanine (preQ1-tRNA) to give epoxyqueuosine (oQ-tRNA). This is S-adenosylmethionine:tRNA ribosyltransferase-isomerase from Clostridium tetani (strain Massachusetts / E88).